The primary structure comprises 31 residues: Sarcolipin (31 aa).

The Cytoplasmic portion of the chain corresponds to 1–7; the sequence is MERSTRE. The chain crosses the membrane as a helical span at residues 8–26; it reads LCLNFTVVLITVILIWLLV. The Lumenal portion of the chain corresponds to 27 to 31; sequence RSYQY.

The protein belongs to the sarcolipin family. In terms of assembly, homooligomer. Can also form heterooligomers with other sarcoplasmic/endoplasmic reticulum calcium ATPase (SERCA) regulators ARLN, ERLN, PLN and STRIT1/DWORF. Monomer. Interacts with calcium ATPase ATP2A1/SERCA1. Interacts as a monomer with ATP2A2/SERCA2; the interaction decreases ATP2A2 Ca(2+) affinity. Interacts with VMP1; VMP1 competes with PLN and SLN to prevent them from forming an inhibitory complex with ATP2A2. Skeletal muscle (at protein level).

It localises to the sarcoplasmic reticulum membrane. The protein localises to the endoplasmic reticulum membrane. Its function is as follows. Reversibly inhibits the activity of ATP2A1/SERCA1 and ATP2A2/SERCA2 in sarcoplasmic reticulum by decreasing the apparent affinity of the ATPase for Ca(2+). Also inhibits the activity of ATP2A3/SERCA3. Modulates calcium re-uptake during muscle relaxation and plays an important role in calcium homeostasis in muscle. Required for muscle-based, non-shivering thermogenesis. This Oryctolagus cuniculus (Rabbit) protein is Sarcolipin (SLN).